A 474-amino-acid polypeptide reads, in one-letter code: MNWVEKYRPKTMSEIVGNNKIKEELKNWIEEILHNEIPKPVLLVGPPGCGKTTLTNALANDYGFELIELNASDKRNKDIIRQIVGGASSSKSITGKRVLIVLDEVDGLSGNSDRGGVSEIIKIIKNAKNPIILTANDIYKPSLMSLRTVCNIVKIGSVHTNSIVPVLRRISLKEGFEVDDKILKIIAKHAGGDVRSAINDLESLAMGNTFDEDNVRELPDRDTDKSIFDAIRIIFKTTHYDISLEATRDLKEDIGTVQEWIAENVPREYKKGKEICLAYDNLSKADIFLGRVYKRQYYGLWRYASALMSAGVSLAKDEKYRGFFSYMRPTIFTKMSRSKGKRGAVNKVLEKISLKSHVSKRRAREDILYLEYILKNDAEMGAKLCEFYEFTKEDIEYLTNKTIAKKIIKLMKGDDKKTNNKKGKENKTKNTTKKIKEIKETPKKEEVKEPKKQIEKQKSEKKEPKKQMTLESFF.

Residue 45 to 52 participates in ATP binding; that stretch reads GPPGCGKT. Basic and acidic residues predominate over residues 415–468; it reads DKKTNNKKGKENKTKNTTKKIKEIKETPKKEEVKEPKKQIEKQKSEKKEPKKQM. Positions 415 to 474 are disordered; it reads DKKTNNKKGKENKTKNTTKKIKEIKETPKKEEVKEPKKQIEKQKSEKKEPKKQMTLESFF.

Belongs to the activator 1 small subunits family. RfcL subfamily. Heteromultimer composed of small subunits (RfcS) and large subunits (RfcL).

Functionally, part of the RFC clamp loader complex which loads the PCNA sliding clamp onto DNA. The polypeptide is Replication factor C large subunit (Methanococcus aeolicus (strain ATCC BAA-1280 / DSM 17508 / OCM 812 / Nankai-3)).